Consider the following 470-residue polypeptide: Cell division protein FtsP (470 aa).

The tat-type signal signal peptide spans 1 to 27; that stretch reads MSFSRRQFLQASGIALCAGAIPLRANA. In terms of domain architecture, Plastocyanin-like spans 222–287; the sequence is VEVSRGWVRL…RREILVDMTN (66 aa).

Belongs to the FtsP family. Post-translationally, predicted to be exported by the Tat system. The position of the signal peptide cleavage has not been experimentally proven.

It localises to the periplasm. In terms of biological role, cell division protein that is required for growth during stress conditions. May be involved in protecting or stabilizing the divisomal assembly under conditions of stress. The protein is Cell division protein FtsP of Salmonella typhi.